A 549-amino-acid polypeptide reads, in one-letter code: Glucose-6-phosphate isomerase (549 aa).

Glu-353 functions as the Proton donor in the catalytic mechanism. Active-site residues include His-384 and Lys-513.

Belongs to the GPI family.

The protein localises to the cytoplasm. It carries out the reaction alpha-D-glucose 6-phosphate = beta-D-fructose 6-phosphate. It functions in the pathway carbohydrate biosynthesis; gluconeogenesis. The protein operates within carbohydrate degradation; glycolysis; D-glyceraldehyde 3-phosphate and glycerone phosphate from D-glucose: step 2/4. Functionally, catalyzes the reversible isomerization of glucose-6-phosphate to fructose-6-phosphate. The sequence is that of Glucose-6-phosphate isomerase from Bartonella bacilliformis (strain ATCC 35685 / KC583 / Herrer 020/F12,63).